The sequence spans 119 residues: Large ribosomal subunit protein uL18 (119 aa).

This sequence belongs to the universal ribosomal protein uL18 family. Part of the 50S ribosomal subunit; part of the 5S rRNA/L5/L18/L25 subcomplex. Contacts the 5S and 23S rRNAs.

In terms of biological role, this is one of the proteins that bind and probably mediate the attachment of the 5S RNA into the large ribosomal subunit, where it forms part of the central protuberance. This chain is Large ribosomal subunit protein uL18, found in Clostridium kluyveri (strain ATCC 8527 / DSM 555 / NBRC 12016 / NCIMB 10680 / K1).